Reading from the N-terminus, the 284-residue chain is 2,3,4,5-tetrahydropyridine-2,6-dicarboxylate N-succinyltransferase (284 aa).

Positions 111 and 148 each coordinate substrate.

It belongs to the transferase hexapeptide repeat family. Homotrimer.

It localises to the cytoplasm. The catalysed reaction is (S)-2,3,4,5-tetrahydrodipicolinate + succinyl-CoA + H2O = (S)-2-succinylamino-6-oxoheptanedioate + CoA. The protein operates within amino-acid biosynthesis; L-lysine biosynthesis via DAP pathway; LL-2,6-diaminopimelate from (S)-tetrahydrodipicolinate (succinylase route): step 1/3. In Chelativorans sp. (strain BNC1), this protein is 2,3,4,5-tetrahydropyridine-2,6-dicarboxylate N-succinyltransferase.